A 97-amino-acid chain; its full sequence is Kininogen-1 (97 aa).

A signal peptide spans 1-23 (MRLWFCLSFLIILCVEHFPGTLA).

This sequence belongs to the bradykinin-related peptide family. In terms of tissue distribution, expressed by the skin glands.

It localises to the secreted. Its function is as follows. [Ala3,Thr6]bradykinin: produces in vitro relaxation of rat arterial smooth muscle and constriction of intestinal smooth muscle. Possesses insulin-releasing activity. May target bradykinin receptors (BDKRB). This is Kininogen-1 from Bombina variegata (Yellow-bellied toad).